We begin with the raw amino-acid sequence, 140 residues long: 6,7-dimethyl-8-ribityllumazine synthase (140 aa).

5-amino-6-(D-ribitylamino)uracil contacts are provided by residues phenylalanine 11, 42 to 44, and 66 to 68; these read ALE and VVI. 71 to 72 is a binding site for (2S)-2-hydroxy-3-oxobutyl phosphate; the sequence is ET. Histidine 74 (proton donor) is an active-site residue. Residue asparagine 98 participates in 5-amino-6-(D-ribitylamino)uracil binding. Arginine 112 is a binding site for (2S)-2-hydroxy-3-oxobutyl phosphate.

Belongs to the DMRL synthase family.

The enzyme catalyses (2S)-2-hydroxy-3-oxobutyl phosphate + 5-amino-6-(D-ribitylamino)uracil = 6,7-dimethyl-8-(1-D-ribityl)lumazine + phosphate + 2 H2O + H(+). Its pathway is cofactor biosynthesis; riboflavin biosynthesis; riboflavin from 2-hydroxy-3-oxobutyl phosphate and 5-amino-6-(D-ribitylamino)uracil: step 1/2. In terms of biological role, catalyzes the formation of 6,7-dimethyl-8-ribityllumazine by condensation of 5-amino-6-(D-ribitylamino)uracil with 3,4-dihydroxy-2-butanone 4-phosphate. This is the penultimate step in the biosynthesis of riboflavin. This is 6,7-dimethyl-8-ribityllumazine synthase from Erythrobacter litoralis (strain HTCC2594).